The primary structure comprises 70 residues: ATP synthase subunit c (70 aa).

2 consecutive transmembrane segments (helical) span residues I4–I24 and F47–V67.

The protein belongs to the ATPase C chain family. In terms of assembly, F-type ATPases have 2 components, F(1) - the catalytic core - and F(0) - the membrane proton channel. F(1) has five subunits: alpha(3), beta(3), gamma(1), delta(1), epsilon(1). F(0) has three main subunits: a(1), b(2) and c(10-14). The alpha and beta chains form an alternating ring which encloses part of the gamma chain. F(1) is attached to F(0) by a central stalk formed by the gamma and epsilon chains, while a peripheral stalk is formed by the delta and b chains.

Its subcellular location is the cell membrane. Its function is as follows. F(1)F(0) ATP synthase produces ATP from ADP in the presence of a proton or sodium gradient. F-type ATPases consist of two structural domains, F(1) containing the extramembraneous catalytic core and F(0) containing the membrane proton channel, linked together by a central stalk and a peripheral stalk. During catalysis, ATP synthesis in the catalytic domain of F(1) is coupled via a rotary mechanism of the central stalk subunits to proton translocation. In terms of biological role, key component of the F(0) channel; it plays a direct role in translocation across the membrane. A homomeric c-ring of between 10-14 subunits forms the central stalk rotor element with the F(1) delta and epsilon subunits. This chain is ATP synthase subunit c, found in Priestia megaterium (strain ATCC 12872 / QMB1551) (Bacillus megaterium).